The primary structure comprises 634 residues: Ankyrin repeat protein OPG025 (634 aa).

6 ANK repeats span residues 36-69, 70-100, 103-134, 175-211, 307-337, and 412-441; these read DGET…YKNI, NDFD…EINS, NGIN…PTCS, MGKT…EMRY, IQDL…TLYR, and HGCS…DINI.

Belongs to the orthopoxvirus OPG025 family. In terms of assembly, interacts with components of host SCF complex CUL1 and SKP1 and components of the cullin deneddylation/COP9 signalosome complex subunits COPS7A and COPS7B.

In terms of biological role, plays a role in the inhibition of host immune repsonse by counteracting the action of interferons on early events in the viral replication cycle. The chain is Ankyrin repeat protein OPG025 (OPG025) from Vaccinia virus (strain Copenhagen) (VACV).